A 399-amino-acid chain; its full sequence is Succinate--CoA ligase [ADP-forming] subunit beta (399 aa).

One can recognise an ATP-grasp domain in the interval 9-254 (KAVLKSFGAP…TTEEDEKEIE (246 aa)). Residues Lys46, 53-55 (GRG), Glu109, Ala112, and Glu117 each bind ATP. 2 residues coordinate Mg(2+): Asn209 and Asp223. Substrate-binding positions include Asn274 and 331–333 (GIM).

It belongs to the succinate/malate CoA ligase beta subunit family. In terms of assembly, heterotetramer of two alpha and two beta subunits. It depends on Mg(2+) as a cofactor.

The enzyme catalyses succinate + ATP + CoA = succinyl-CoA + ADP + phosphate. The catalysed reaction is GTP + succinate + CoA = succinyl-CoA + GDP + phosphate. The protein operates within carbohydrate metabolism; tricarboxylic acid cycle; succinate from succinyl-CoA (ligase route): step 1/1. Succinyl-CoA synthetase functions in the citric acid cycle (TCA), coupling the hydrolysis of succinyl-CoA to the synthesis of either ATP or GTP and thus represents the only step of substrate-level phosphorylation in the TCA. The beta subunit provides nucleotide specificity of the enzyme and binds the substrate succinate, while the binding sites for coenzyme A and phosphate are found in the alpha subunit. The polypeptide is Succinate--CoA ligase [ADP-forming] subunit beta (Maricaulis maris (strain MCS10) (Caulobacter maris)).